Consider the following 400-residue polypeptide: Chalcone synthase WHP1 (400 aa).

The active site involves Cys-167.

It belongs to the thiolase-like superfamily. Chalcone/stilbene synthases family.

It carries out the reaction (E)-4-coumaroyl-CoA + 3 malonyl-CoA + 3 H(+) = 2',4,4',6'-tetrahydroxychalcone + 3 CO2 + 4 CoA. The protein operates within secondary metabolite biosynthesis; flavonoid biosynthesis. Functionally, the primary product of this enzyme is 4,2',4',6'-tetrahydroxychalcone (also termed naringenin-chalcone or chalcone) which can under specific conditions spontaneously isomerize into naringenin. The polypeptide is Chalcone synthase WHP1 (WHP1) (Zea mays (Maize)).